Reading from the N-terminus, the 401-residue chain is DNA damage checkpoint control protein RAD17 (401 aa).

Residues 367–393 (KKIKLPSEEENNKNRESEDEENHCKYP) are disordered. Positions 371–393 (LPSEEENNKNRESEDEENHCKYP) are enriched in basic and acidic residues. At Ser-383 the chain carries Phosphoserine.

Belongs to the rad1 family. Component of the checkpoint clamp complex composed of DDC1, MEC3 and RAD17. The interaction with MEC3 is performed in a RAD17-dependent manner. The checkpoint clamp complex loads onto DNA. Interacts with the DNA polymerase zeta subunit REV7. 2 RAD17 subunits also form a heterotrimer with one MEC3 subunit.

It is found in the nucleus. In terms of biological role, component of the checkpoint clamp complex involved in the surveillance mechanism that allows the DNA repair pathways to act to restore the integrity of the DNA prior to DNA synthesis or separation of the replicated chromosomes. Associates with sites of DNA damage and modulates the MEC1 signaling pathway and the activation of RAD53 in response to DNA damage at phase G1. The complex also physically regulates DNA polymerase zeta-dependent mutagenesis by controlling the access of polymerase zeta to damaged DNA. Contrary to its human counterpart, the 9-1-1 complex, the checkpoint clamp complex shows no detectable exonuclease activity. In Saccharomyces cerevisiae (strain ATCC 204508 / S288c) (Baker's yeast), this protein is DNA damage checkpoint control protein RAD17 (RAD17).